The sequence spans 343 residues: Endoplasmic reticulum-resident calcium binding protein (343 aa).

Positions 1 to 26 (MMKINLYKLLCFICVIFLLHKNVVRS) are cleaved as a signal peptide. 5 consecutive EF-hand domains span residues 59–94 (GAKERIEKLFHLIDKNNDKEITEEELNTWSSFLKNE), 95–130 (IFLKQVQAEMGQIDSDKDGFISLNELNDAFAQNLDA), 135–170 (KHSEGLLKRFQIVDKDKDGKLSINEVGLLIDPMKDE), 172–207 (LKELEINEILEHHDVNKDGKISLDEFKQTRSDESSG), and 210–245 (KDDEMALDDFNFFDANKDGFIDKEEIIKVYFDPAHE). Ca(2+)-binding residues include aspartate 72, asparagine 74, aspartate 76, glutamate 78, glutamate 83, aspartate 108, aspartate 110, aspartate 112, glutamate 119, aspartate 148, aspartate 150, aspartate 152, lysine 154, glutamate 159, aspartate 185, asparagine 187, aspartate 189, lysine 191, glutamate 196, aspartate 223, asparagine 225, aspartate 227, and glutamate 234. Over residues 313 to 331 (EDDDMDADNTEDDKDEADD) the composition is skewed to acidic residues. Residues 313 to 343 (EDDDMDADNTEDDKDEADDASQQKSPAIDEL) form a disordered region.

Belongs to the CREC family.

It is found in the endoplasmic reticulum. Functionally, calcium-binding protein. Required for schizont to ring transition. Required for the breakdown of the parasitophorous vacuole membrane during egress. Required for the proteolytic maturation of apical membrane antigen 1 (AMA-1) during egress. Required for the proteolytic maturation of subtilisin-like protease 1 (SUB1) during egress. Required for the proteolytic maturation of plasmepsin X (PMX) during egress. In Plasmodium falciparum (isolate 3D7), this protein is Endoplasmic reticulum-resident calcium binding protein.